A 290-amino-acid chain; its full sequence is Xyloglucan endotransglycosylase/hydrolase protein 8 (290 aa).

Positions 1–25 are cleaved as a signal peptide; it reads MAKHLALSVAAAVAVSWLAASSAAA. One can recognise a GH16 domain in the interval 26 to 218; it reads AGFYEKFDVV…WSGAPFVVSY (193 aa). Residue E106 is the Nucleophile of the active site. The active-site Proton donor is E110. E110 contacts xyloglucan. N114 carries N-linked (GlcNAc...) asparagine glycosylation. Residues 123 to 125, 133 to 135, and 197 to 198 contribute to the xyloglucan site; these read NTN, KKE, and YW. Disulfide bonds link C226-C240 and C273-C287. A xyloglucan-binding site is contributed by R278.

Belongs to the glycosyl hydrolase 16 family. XTH group 2 subfamily. In terms of processing, contains at least one intrachain disulfide bond essential for its enzymatic activity. In terms of tissue distribution, transcript strongly detected in leaf sheaths. Weakly or not expressed in leaf blades, roots and calli. Accumulation of transcript detected in shoot apex meristem, vascular tissues, young leaves, vascular bundles of leaf sheaths, and peripheral cylinder of the vascular bundles and fibers in the nodal region.

Its subcellular location is the secreted. It localises to the cell wall. The protein localises to the extracellular space. The protein resides in the apoplast. It catalyses the reaction breaks a beta-(1-&gt;4) bond in the backbone of a xyloglucan and transfers the xyloglucanyl segment on to O-4 of the non-reducing terminal glucose residue of an acceptor, which can be a xyloglucan or an oligosaccharide of xyloglucan.. Functionally, catalyzes xyloglucan endohydrolysis (XEH) and/or endotransglycosylation (XET). Cleaves and religates xyloglucan polymers, an essential constituent of the primary cell wall, and thereby participates in cell wall construction of growing tissues. May promote elongation of three internodes (II, III and IV) and may be involved in cell elongation processes. The polypeptide is Xyloglucan endotransglycosylase/hydrolase protein 8 (XTH8) (Oryza sativa subsp. japonica (Rice)).